The following is a 113-amino-acid chain: T cell receptor alpha variable 8-1 (113 aa).

An N-terminal signal peptide occupies residues 1 to 20 (MLLLLIPVLGMIFALRDARA). Positions 21–113 (QSVSQHNHHV…DTAEYFCAVN (93 aa)) constitute an Ig-like domain. Cysteine 42 and cysteine 110 are joined by a disulfide. The N-linked (GlcNAc...) asparagine glycan is linked to asparagine 43.

In terms of assembly, alpha-beta TR is a heterodimer composed of an alpha and beta chain; disulfide-linked. The alpha-beta TR is associated with the transmembrane signaling CD3 coreceptor proteins to form the TR-CD3 (TcR or TCR). The assembly of alpha-beta TR heterodimers with CD3 occurs in the endoplasmic reticulum where a single alpha-beta TR heterodimer associates with one CD3D-CD3E heterodimer, one CD3G-CD3E heterodimer and one CD247 homodimer forming a stable octameric structure. CD3D-CD3E and CD3G-CD3E heterodimers preferentially associate with TR alpha and TR beta chains, respectively. The association of the CD247 homodimer is the last step of TcR assembly in the endoplasmic reticulum and is required for transport to the cell surface.

It localises to the cell membrane. Functionally, v region of the variable domain of T cell receptor (TR) alpha chain that participates in the antigen recognition. Alpha-beta T cell receptors are antigen specific receptors which are essential to the immune response and are present on the cell surface of T lymphocytes. Recognize peptide-major histocompatibility (MH) (pMH) complexes that are displayed by antigen presenting cells (APC), a prerequisite for efficient T cell adaptive immunity against pathogens. Binding of alpha-beta TR to pMH complex initiates TR-CD3 clustering on the cell surface and intracellular activation of LCK that phosphorylates the ITAM motifs of CD3G, CD3D, CD3E and CD247 enabling the recruitment of ZAP70. In turn ZAP70 phosphorylates LAT, which recruits numerous signaling molecules to form the LAT signalosome. The LAT signalosome propagates signal branching to three major signaling pathways, the calcium, the mitogen-activated protein kinase (MAPK) kinase and the nuclear factor NF-kappa-B (NF-kB) pathways, leading to the mobilization of transcription factors that are critical for gene expression and essential for T cell growth and differentiation. The T cell repertoire is generated in the thymus, by V-(D)-J rearrangement. This repertoire is then shaped by intrathymic selection events to generate a peripheral T cell pool of self-MH restricted, non-autoaggressive T cells. Post-thymic interaction of alpha-beta TR with the pMH complexes shapes TR structural and functional avidity. This Homo sapiens (Human) protein is T cell receptor alpha variable 8-1.